Here is a 786-residue protein sequence, read N- to C-terminus: Signal transducer and activator of transcription 5B (786 aa).

The residue at position 90 (Tyr-90) is a Phosphotyrosine. Ser-128 is subject to Phosphoserine. The region spanning 589–686 is the SH2 domain; it reads WNDGAILGFV…EVYSKYYTPV (98 aa). Residues Tyr-682 and Tyr-699 each carry the phosphotyrosine modification.

It belongs to the transcription factor STAT family. In terms of assembly, upon activation, forms a homodimer or a heterodimer with a related family member. Binds NR3C1. Interacts with NCOA1. Interacts with SOCS7. Interacts (via SH2 domain) with INSR. Interacts with CPEB3; this inhibits STAT5B-mediated transcriptional activation. Post-translationally, tyrosine phosphorylated in response to signaling via activated KIT, resulting in translocation to the nucleus. Tyrosine phosphorylated in response to signaling via activated FLT3; wild-type FLT3 results in much weaker phosphorylation than constitutively activated mutant FLT3. Alternatively, can be phosphorylated by JAK2. Phosphorylation at Tyr-699 by PTK6 or HCK leads to an increase of its transcriptional activity. As to expression, in the virgin, found in most tissues. Particularly abundant in muscle tissue of virgin and lactating females, and of males.

The protein localises to the cytoplasm. The protein resides in the nucleus. Carries out a dual function: signal transduction and activation of transcription. Mediates cellular responses to the cytokine KITLG/SCF and other growth factors. Binds to the GAS element and activates PRL-induced transcription. Positively regulates hematopoietic/erythroid differentiation. The chain is Signal transducer and activator of transcription 5B (Stat5b) from Mus musculus (Mouse).